The chain runs to 208 residues: Small ribosomal subunit protein uS4 (208 aa).

The interval 24–52 (GVKPFDVKTKKANKAPGQHGQARGGKQSE) is disordered. Positions 98–160 (SRLDNVVYRM…AKQQLRIKNA (63 aa)) constitute an S4 RNA-binding domain.

Belongs to the universal ribosomal protein uS4 family. Part of the 30S ribosomal subunit. Contacts protein S5. The interaction surface between S4 and S5 is involved in control of translational fidelity.

Functionally, one of the primary rRNA binding proteins, it binds directly to 16S rRNA where it nucleates assembly of the body of the 30S subunit. Its function is as follows. With S5 and S12 plays an important role in translational accuracy. The sequence is that of Small ribosomal subunit protein uS4 from Acinetobacter baumannii (strain ACICU).